Here is a 433-residue protein sequence, read N- to C-terminus: Histidinol dehydrogenase (433 aa).

NAD(+)-binding residues include tyrosine 129, glutamine 191, and asparagine 214. Residues serine 237, glutamine 259, and histidine 262 each coordinate substrate. 2 residues coordinate Zn(2+): glutamine 259 and histidine 262. Catalysis depends on proton acceptor residues glutamate 326 and histidine 327. Substrate-binding residues include histidine 327, aspartate 360, glutamate 414, and histidine 419. A Zn(2+)-binding site is contributed by aspartate 360. Residue histidine 419 coordinates Zn(2+).

It belongs to the histidinol dehydrogenase family. It depends on Zn(2+) as a cofactor.

The enzyme catalyses L-histidinol + 2 NAD(+) + H2O = L-histidine + 2 NADH + 3 H(+). The protein operates within amino-acid biosynthesis; L-histidine biosynthesis; L-histidine from 5-phospho-alpha-D-ribose 1-diphosphate: step 9/9. Functionally, catalyzes the sequential NAD-dependent oxidations of L-histidinol to L-histidinaldehyde and then to L-histidine. This Methanosarcina mazei (strain ATCC BAA-159 / DSM 3647 / Goe1 / Go1 / JCM 11833 / OCM 88) (Methanosarcina frisia) protein is Histidinol dehydrogenase.